The primary structure comprises 122 residues: Large ribosomal subunit protein uL18 (122 aa).

Residues 1–19 show a composition bias toward basic residues; sequence MSTLSRKQKTQKRHKRLRR. The interval 1–26 is disordered; sequence MSTLSRKQKTQKRHKRLRRNLSGTDQ.

The protein belongs to the universal ribosomal protein uL18 family. Part of the 50S ribosomal subunit; part of the 5S rRNA/L5/L18/L25 subcomplex. Contacts the 5S and 23S rRNAs.

Its function is as follows. This is one of the proteins that bind and probably mediate the attachment of the 5S RNA into the large ribosomal subunit, where it forms part of the central protuberance. This chain is Large ribosomal subunit protein uL18, found in Prochlorococcus marinus (strain SARG / CCMP1375 / SS120).